Here is a 441-residue protein sequence, read N- to C-terminus: Insulinoma-associated protein 1 (441 aa).

The span at 1–12 (MPKGFLVKRSRK) shows a compositional bias: basic residues. The segment at 1-20 (MPKGFLVKRSRKSPPVSYRV) is SNAG domain. 4 disordered regions span residues 1–31 (MPKG…GESL), 43–189 (TGGA…KAIR), 205–224 (LKIK…SSGP), and 278–316 (RWHK…EDGL). The span at 19 to 28 (RVREEEEPRG) shows a compositional bias: basic and acidic residues. Polar residues predominate over residues 74 to 83 (NPDTVQQALY). The span at 89 to 98 (VSREQRERKY) shows a compositional bias: basic and acidic residues. 2 stretches are compositionally biased toward low complexity: residues 138-147 (VSSSSSVSRS) and 169-180 (GATSSSAPSKPP). The C2H2-type 1 zinc-finger motif lies at 258-280 (YRCPECHKVFSCPANLASHRRWH). Residues 292 to 302 (AKEEPLSDRDT) show a composition bias toward basic and acidic residues. C2H2-type zinc fingers lie at residues 317 to 339 (YECP…LLSH), 372 to 395 (HPCP…RLLH), and 400 to 423 (YPCK…NKCH).

The protein belongs to the INSM1 family.

It localises to the nucleus. Functionally, may act as a transcriptional regulator. Plays a role in noradrenergic neuron, pancreatic and gastrointestinal endocrine cells differentiation during embryonic development. The polypeptide is Insulinoma-associated protein 1 (insm1) (Xenopus tropicalis (Western clawed frog)).